The sequence spans 91 residues: DNA-binding protein HU (91 aa).

Belongs to the bacterial histone-like protein family.

In terms of biological role, histone-like DNA-binding protein which is capable of wrapping DNA to stabilize it, and thus to prevent its denaturation under extreme environmental conditions. Also seems to act as a fortuitous virulence factor in delayed sequelae by binding to heparan sulfate-proteoglycans in the extracellular matrix of target organs and acting as a nidus for in situ immune complex formation. This chain is DNA-binding protein HU (hup), found in Streptococcus pyogenes serotype M1.